The sequence spans 785 residues: MRFLKSALPFVASALSLLSVQAAARSQEPSAIQHVSILEHAVINTPSHEVDHLTDFDVTFELPDKHQTIKLELEPNHDILADDAYVQYLDAEGNVHREEPIQRHEHKVFKGRSLLRRDNGLWRPVGWARVYVQRDGSKPLFEGVFSIDNDNHHVELKSTYLQKKRVEDASIPDRKDEYMVVYRDSDMIRQVRSELKRSLISSSSCQAEKLGFNSDPQHPIFRSEFQDMDLGMSSYGSMSLNSLFGLSKRQSDIGGVSGNAGGVNLAQTIGSTSGCPKTKQVALVGIAADCSFRASFDNDDAAKQWIINMVNSASDVYEKSFNISIGLRNLTMTDKTCPETAPASTQWNMPCDQSNITQRLNLFSQWRGQQSDDNAYWTLMSNCPTGSEVGLAWLGQLCNTEVTGDGSNSVSGTNVVVRVSGGGWQVFAHESGHTFGAVHDCDSMTCAQNLEASSQCCPYNRGTCDANGKYIMNPSTGADITAFSPCTIGNICSALGRNSVKSSCLSDNRNVVTYTGSQCGNGIVEAGEDCDCGGESSCGDNPCCDAKTCKFKSGAVCDDANDSCCSQCQFSPAGTVCRASLGECDLQETCTGNSSTCPADSFKKDGEKCGDTSGLTCASGQCTSRDYQCRTVMGSLIHDNNTYACPQFDSSCELICTSPSLGSCFSINQNFLDGTPCGSGGYCHNGRCDGSNFGSWVEQHKNLVIGVACGVGGLLVLSILWCMINRCRRARTVVKRPPMRPWPGPMPPPPPQMGQWAGPNRGYQGLRAEPPPPYPGPYQSATRYA.

Positions 1–26 (MRFLKSALPFVASALSLLSVQAAARS) are cleaved as a signal peptide. At 27–703 (QEPSAIQHVS…GSWVEQHKNL (677 aa)) the chain is on the extracellular side. Positions 279–507 (KQVALVGIAA…NSVKSSCLSD (229 aa)) constitute a Peptidase M12B domain. Asn322, Asn329, and Asn355 each carry an N-linked (GlcNAc...) asparagine glycan. Intrachain disulfides connect Cys398–Cys492 and Cys446–Cys464. His429 contacts Zn(2+). The active site involves Glu430. Zn(2+) is bound by residues His433 and His439. Positions 516-605 (GSQCGNGIVE…TCPADSFKKD (90 aa)) constitute a Disintegrin domain. N-linked (GlcNAc...) asparagine glycosylation is found at Asn561, Asn593, and Asn640. Cys577 and Cys597 are disulfide-bonded. A helical transmembrane segment spans residues 704-724 (VIGVACGVGGLLVLSILWCMI). The Cytoplasmic portion of the chain corresponds to 725–785 (NRCRRARTVV…GPYQSATRYA (61 aa)). Positions 737–785 (PPMRPWPGPMPPPPPQMGQWAGPNRGYQGLRAEPPPPYPGPYQSATRYA) are disordered. The segment covering 739–752 (MRPWPGPMPPPPPQ) has biased composition (pro residues).

It depends on Zn(2+) as a cofactor.

It is found in the membrane. In terms of biological role, probable zinc protease. The polypeptide is Disintegrin and metalloproteinase domain-containing protein B (ADM-B) (Aspergillus fumigatus (strain ATCC MYA-4609 / CBS 101355 / FGSC A1100 / Af293) (Neosartorya fumigata)).